The primary structure comprises 425 residues: uncharacterized protein (425 aa).

The segment at 135-202 (KEQEILGCSH…AAQYCKYCKN (68 aa)) adopts a CHY-type zinc-finger fold. 24 residues coordinate Zn(2+): Cys142, His144, Cys153, Cys156, Cys162, Cys165, His166, His172, Cys184, Cys187, Cys197, Cys200, Cys209, Cys212, His225, Cys226, Cys229, Cys232, His244, Cys245, Cys248, Cys251, His260, and Cys262. A CTCHY-type zinc finger spans residues 204-270 (MGRYYCNKCK…RCIERSTDCN (67 aa)). An RING-type; atypical zinc finger spans residues 271-313 (CPICGEYMFNSRERVIFLSCSHPLHQRCHEEYIRTNYRCPTCY).

This is an uncharacterized protein from Schizosaccharomyces pombe (strain 972 / ATCC 24843) (Fission yeast).